A 283-amino-acid chain; its full sequence is Cyclin-C (283 aa).

In terms of domain architecture, Cyclin N-terminal spans 46–144 (NVIQALGEHL…ILECEFYLLE (99 aa)). Residues 252 to 283 (TILSKMPKPKPPPNSEGEQGPNGSQNSSYSQS) are disordered. Residues 272-283 (PNGSQNSSYSQS) are compositionally biased toward polar residues. Residue serine 275 is modified to Phosphoserine.

Belongs to the cyclin family. Cyclin C subfamily. In terms of assembly, component of the Mediator complex, which is composed of MED1, MED4, MED6, MED7, MED8, MED9, MED10, MED11, MED12, MED13, MED13L, MED14, MED15, MED16, MED17, MED18, MED19, MED20, MED21, MED22, MED23, MED24, MED25, MED26, MED27, MED29, MED30, MED31, CCNC, CDK8 and CDC2L6/CDK11. The MED12, MED13, CCNC and CDK8 subunits form a distinct module termed the CDK8 module. Mediator containing the CDK8 module is less active than Mediator lacking this module in supporting transcriptional activation. Individual preparations of the Mediator complex lacking one or more distinct subunits have been variously termed ARC, CRSP, DRIP, PC2, SMCC and TRAP. The cylin/CDK pair formed by CCNC/CDK8 also associates with the large subunit of RNA polymerase II. As to expression, highest levels in pancreas. High levels in heart, liver, skeletal muscle and kidney. Low levels in brain.

The protein resides in the nucleus. In terms of biological role, component of the Mediator complex, a coactivator involved in regulated gene transcription of nearly all RNA polymerase II-dependent genes. Mediator functions as a bridge to convey information from gene-specific regulatory proteins to the basal RNA polymerase II transcription machinery. Mediator is recruited to promoters by direct interactions with regulatory proteins and serves as a scaffold for the assembly of a functional preinitiation complex with RNA polymerase II and the general transcription factors. Binds to and activates cyclin-dependent kinase CDK8 that phosphorylates the CTD (C-terminal domain) of the large subunit of RNA polymerase II (RNAp II), which may inhibit the formation of a transcription initiation complex. In Homo sapiens (Human), this protein is Cyclin-C (CCNC).